The chain runs to 153 residues: MASGQQERSELDRMAREGETVVPGGTGGKTLEAQEHLAEGRSRGGQTRKEQLGEEGYREMGHKGGETRKEQLGEEGYREMGHKGGETRKEQLGEEGYREMGHKGGETRKEQMGEEGYREMGRKGGLSTMNESGGERAAREGIDIDESKFKTKS.

The tract at residues 1 to 153 (MASGQQERSE…IDESKFKTKS (153 aa)) is disordered. Composition is skewed to basic and acidic residues over residues 7 to 19 (ERSELDRMAREGE), 32 to 122 (EAQE…EMGR), and 133 to 153 (GGERAAREGIDIDESKFKTKS). Repeat copies occupy residues 43–62 (RGGQTRKEQLGEEGYREMGH), 63–82 (KGGETRKEQLGEEGYREMGH), 83–102 (KGGETRKEQLGEEGYREMGH), and 103–122 (KGGETRKEQMGEEGYREMGR). The interval 43–122 (RGGQTRKEQL…GEEGYREMGR (80 aa)) is 4 X 20 AA tandem repeats.

This sequence belongs to the small hydrophilic plant seed protein family.

Its function is as follows. Lea proteins are late embryonic proteins abundant in higher plant seed embryos. This is Late embryogenesis abundant protein B19.4 (B19.4) from Hordeum vulgare (Barley).